A 397-amino-acid polypeptide reads, in one-letter code: Tyrosine aminotransferase (397 aa).

Positions 34, 66, 131, and 184 each coordinate substrate. Lys247 bears the N6-(pyridoxal phosphate)lysine mark. Position 375 (Arg375) interacts with substrate.

This sequence belongs to the class-I pyridoxal-phosphate-dependent aminotransferase family. In terms of assembly, homodimer. Requires pyridoxal 5'-phosphate as cofactor.

The enzyme catalyses L-tyrosine + 2-oxoglutarate = 3-(4-hydroxyphenyl)pyruvate + L-glutamate. It catalyses the reaction 4-methylsulfanyl-2-oxobutanoate + L-tyrosine = 3-(4-hydroxyphenyl)pyruvate + L-methionine. The catalysed reaction is an aromatic L-alpha-amino acid + 2-oxoglutarate = an aromatic oxo-acid + L-glutamate. It carries out the reaction L-aspartate + 2-oxoglutarate = oxaloacetate + L-glutamate. The protein operates within amino-acid biosynthesis; L-methionine biosynthesis via salvage pathway; L-methionine from S-methyl-5-thio-alpha-D-ribose 1-phosphate: step 6/6. With respect to regulation, inhibited by malate and nitrotyrosine by approximately 20% at the higher concentration. At 100 uM, canaline and carboxymethoxylamine inhibit aminotransferase activity by 35 and 70%, respectively. Addition of 1.0 mM carboxymethoxylamine lead to a complete inhibition of the aminotransferase activity. Functionally, catalyzes the formation of methionine from 2-keto-4-methylthiobutyrate (KMTB) primarily using aromatic amino acids (tyrosine, phenylalanine and tryptophan) or glutamate as the amino donors. Histidine, leucine, asparagine, or arginine are also functional amino donors but to a lesser extent. Can also use alpha-ketoglutarate, oxaloacetate and pyruvate as the amino acceptors. The polypeptide is Tyrosine aminotransferase (tyrB) (Klebsiella pneumoniae).